The chain runs to 62 residues: Antitoxin VbhA (62 aa).

The short motif at 20-25 (SQRLEG) is the Inhibitory (S/T)XXXE(G/N) motif element. Position 24 (Glu24) interacts with ATP.

Interacts with VbhT.

Its function is as follows. Antitoxin component of type II toxin-antitoxin (TA) system VbhT-VbhA. Acts by inhibiting the adenylyltransferase activity of VbhT; competes with ATP-binding and prevents productive ATP-binding to VbhT. The chain is Antitoxin VbhA from Bartonella schoenbuchensis (strain DSM 13525 / NCTC 13165 / R1).